Consider the following 767-residue polypeptide: Granule-bound starch synthase 2, chloroplastic/amyloplastic (767 aa).

Residues 1-45 constitute a chloroplast transit peptide; sequence MENSILLHSGNQFHPNLPLLALRPKKLSLIHGSSREQMWRIKRVK. Disordered regions lie at residues 160–204 and 226–268; these read KRDL…SSQE and YMPS…EKPP. Low complexity predominate over residues 172-188; sequence SRSSITASSQISSTVSS. The span at 230–245 shows a compositional bias: basic and acidic residues; the sequence is LRKESSASHVEQRNEN. The span at 253–262 shows a compositional bias: acidic residues; that stretch reads ANEETEDPVN. Position 290 (lysine 290) interacts with ADP-alpha-D-glucose.

This sequence belongs to the glycosyltransferase 1 family. Bacterial/plant glycogen synthase subfamily.

The protein localises to the plastid. Its subcellular location is the chloroplast. It is found in the amyloplast. The enzyme catalyses [(1-&gt;4)-alpha-D-glucosyl](n) + ADP-alpha-D-glucose = [(1-&gt;4)-alpha-D-glucosyl](n+1) + ADP + H(+). The protein operates within glycan biosynthesis; starch biosynthesis. Its function is as follows. Accounts for only 10 to 15% of the total soluble starch synthase activity in tubers. The chain is Granule-bound starch synthase 2, chloroplastic/amyloplastic (SS2) from Solanum tuberosum (Potato).